Here is a 170-residue protein sequence, read N- to C-terminus: NADH-ubiquinone oxidoreductase chain 6 (170 aa).

Helical transmembrane passes span 1–21 (MIYM…AVAS), 26–46 (FYAA…IVSF), 49–69 (SFLS…VFAY), 86–106 (VVFY…FLGG), and 138–158 (WVII…GIWV).

This sequence belongs to the complex I subunit 6 family. Core subunit of respiratory chain NADH dehydrogenase (Complex I) which is composed of 45 different subunits.

It localises to the mitochondrion inner membrane. The catalysed reaction is a ubiquinone + NADH + 5 H(+)(in) = a ubiquinol + NAD(+) + 4 H(+)(out). Functionally, core subunit of the mitochondrial membrane respiratory chain NADH dehydrogenase (Complex I) which catalyzes electron transfer from NADH through the respiratory chain, using ubiquinone as an electron acceptor. Essential for the catalytic activity and assembly of complex I. The chain is NADH-ubiquinone oxidoreductase chain 6 (mt-nd6) from Xenopus laevis (African clawed frog).